The chain runs to 191 residues: Prostaglandin-H2 D-isomerase (191 aa).

The N-terminal stretch at 1 to 24 is a signal peptide; sequence MAALHTLWMGLVLLGVLGVLQTRA. At Gln-25 the chain carries Pyrrolidone carboxylic acid. N-linked (GlcNAc...) asparagine glycosylation is present at Asn-51. Cys-65 acts as the Nucleophile in catalysis. Asn-78 carries N-linked (GlcNAc...) asparagine glycosylation. A disulfide bridge links Cys-89 with Cys-186.

Belongs to the calycin superfamily. Lipocalin family. As to quaternary structure, monomer. In terms of processing, N- and O-glycosylated. Both N-glycosylation recognition sites are almost quantitatively occupied by N-glycans of the biantennary complex type, with a considerable proportion of structures bearing a bisecting GlcNAc. N-glycan at Asn-78: dHex1Hex5HexNAc4. Agalacto structure as well as sialylated and nonsialylated oligosaccharides bearing alpha2-3- and/or alpha2-6-linked NeuNAc are present.

It is found in the rough endoplasmic reticulum. The protein resides in the nucleus membrane. It localises to the golgi apparatus. The protein localises to the cytoplasm. Its subcellular location is the perinuclear region. It is found in the secreted. It carries out the reaction prostaglandin H2 = prostaglandin D2. In terms of biological role, catalyzes the conversion of PGH2 to PGD2, a prostaglandin involved in smooth muscle contraction/relaxation and a potent inhibitor of platelet aggregation. Involved in a variety of CNS functions, such as sedation, NREM sleep and PGE2-induced allodynia, and may have an anti-apoptotic role in oligodendrocytes. Binds small non-substrate lipophilic molecules, including biliverdin, bilirubin, retinal, retinoic acid and thyroid hormone, and may act as a scavenger for harmful hydrophobic molecules and as a secretory retinoid and thyroid hormone transporter. Possibly involved in development and maintenance of the blood-brain, blood-retina, blood-aqueous humor and blood-testis barrier. It is likely to play important roles in both maturation and maintenance of the central nervous system and male reproductive system. Involved in PLA2G3-dependent maturation of mast cells. PLA2G3 is secreted by immature mast cells and acts on nearby fibroblasts upstream to PTDGS to synthesize PGD2, which in turn promotes mast cell maturation and degranulation via PTGDR. This chain is Prostaglandin-H2 D-isomerase (PTGDS), found in Felis catus (Cat).